The following is a 305-amino-acid chain: Putative F-box protein PP2-B8 (305 aa).

The F-box domain occupies 33–79 (VAELDDLPEECVSIIVSFTSPQDACVLASVSKTFASAVKSDIVWEKF).

This is Putative F-box protein PP2-B8 (PP2B8) from Arabidopsis thaliana (Mouse-ear cress).